The sequence spans 101 residues: Large ribosomal subunit protein uL24 (101 aa).

The protein belongs to the universal ribosomal protein uL24 family. Part of the 50S ribosomal subunit.

In terms of biological role, one of two assembly initiator proteins, it binds directly to the 5'-end of the 23S rRNA, where it nucleates assembly of the 50S subunit. Its function is as follows. One of the proteins that surrounds the polypeptide exit tunnel on the outside of the subunit. The protein is Large ribosomal subunit protein uL24 of Thermobifida fusca (strain YX).